The following is a 1349-amino-acid chain: Elongator complex protein 1 (1349 aa).

Ser-529, Ser-539, Ser-551, Ser-636, and Ser-828 each carry phosphoserine. Positions Gln-919 to Phe-1349 are mediates dimerization. Ser-1198 and Ser-1202 each carry phosphoserine; by HRR25. 2 positions are modified to phosphoserine: Ser-1205 and Ser-1209. Positions Tyr-1214–Arg-1228 are enriched in low complexity. The disordered stretch occupies residues Tyr-1214–Lys-1245. Residues Arg-1228–Lys-1246 form a required for binding to tRNA region.

This sequence belongs to the ELP1/IKA1 family. In terms of assembly, homodimer; dimerization promotes ELP1/IKI3 stability and elongator complex formation. Component of the elongator complex which consists of ELP1/IKI3, ELP2, ELP3, ELP4, ELP5/IKI1 and ELP6. The elongator complex is composed of two copies of the Elp123 subcomplex (composed of ELP1/IKI3, ELP2 and ELP3) and two copies of the Elp456 subcomplex (composed of ELP4, ELP5/IKI1 and ELP6). The Elp123 subcomplex forms a two-lobed scaffold, which binds the Elp456 subcomplex asymmetrically. In the complex, ELP1/IKI3 interacts with ELP2. In each lobe, ELP2 is tightly sandwiched between ELP1/IKI3 and ELP3. The Elp123 subcomplex binds tRNA through ELP1/IKI3 and ELP3 and can bind 2 tRNAs simultaneously. tRNA-binding induces conformational rearrangements which precisely position the targeted anticodon base in the active site. The Elp456 subcomplex binds tRNA and has ATPase activity. ELP1/IKI3 interacts with HRR25 and KTI12. Interacts with KTI11/DPH3. In terms of processing, phosphorylation promotes the tRNA modification function of the elongator complex.

The protein resides in the cytoplasm. It is found in the nucleus. It participates in tRNA modification; 5-methoxycarbonylmethyl-2-thiouridine-tRNA biosynthesis. In terms of biological role, component of the elongator complex which is required for multiple tRNA modifications, including mcm5U (5-methoxycarbonylmethyl uridine), mcm5s2U (5-methoxycarbonylmethyl-2-thiouridine), and ncm5U (5-carbamoylmethyl uridine). The elongator complex catalyzes formation of carboxymethyluridine in the wobble base at position 34 in tRNAs. Functions as a gamma-toxin target (TOT); disruption of the complex confers resistance to Kluyveromyces lactis toxin zymocin (pGKL1 killer toxin). May also be involved in sensitivity to Pichia inositovora toxin. ELP1/IKI3 binds to tRNA, mediating interaction of the elongator complex with tRNA. Independently, may be involved in polarized exocytosis. The polypeptide is Elongator complex protein 1 (IKI3) (Saccharomyces cerevisiae (strain ATCC 204508 / S288c) (Baker's yeast)).